Reading from the N-terminus, the 122-residue chain is Small ribosomal subunit protein uS8c (122 aa).

The protein belongs to the universal ribosomal protein uS8 family. As to quaternary structure, part of the 30S ribosomal subunit.

It localises to the plastid. Its subcellular location is the chloroplast. Its function is as follows. One of the primary rRNA binding proteins, it binds directly to 16S rRNA central domain where it helps coordinate assembly of the platform of the 30S subunit. This is Small ribosomal subunit protein uS8c (rps8) from Ostreococcus tauri.